The primary structure comprises 128 residues: Large ribosomal subunit protein bL12 (128 aa).

Belongs to the bacterial ribosomal protein bL12 family. As to quaternary structure, homodimer. Part of the ribosomal stalk of the 50S ribosomal subunit. Forms a multimeric L10(L12)X complex, where L10 forms an elongated spine to which 2 to 4 L12 dimers bind in a sequential fashion. Binds GTP-bound translation factors.

Functionally, forms part of the ribosomal stalk which helps the ribosome interact with GTP-bound translation factors. Is thus essential for accurate translation. The polypeptide is Large ribosomal subunit protein bL12 (Synechocystis sp. (strain ATCC 27184 / PCC 6803 / Kazusa)).